The chain runs to 155 residues: SsrA-binding protein (155 aa).

The protein belongs to the SmpB family.

It is found in the cytoplasm. Its function is as follows. Required for rescue of stalled ribosomes mediated by trans-translation. Binds to transfer-messenger RNA (tmRNA), required for stable association of tmRNA with ribosomes. tmRNA and SmpB together mimic tRNA shape, replacing the anticodon stem-loop with SmpB. tmRNA is encoded by the ssrA gene; the 2 termini fold to resemble tRNA(Ala) and it encodes a 'tag peptide', a short internal open reading frame. During trans-translation Ala-aminoacylated tmRNA acts like a tRNA, entering the A-site of stalled ribosomes, displacing the stalled mRNA. The ribosome then switches to translate the ORF on the tmRNA; the nascent peptide is terminated with the 'tag peptide' encoded by the tmRNA and targeted for degradation. The ribosome is freed to recommence translation, which seems to be the essential function of trans-translation. The sequence is that of SsrA-binding protein from Streptococcus equi subsp. zooepidemicus (strain H70).